The following is a 190-amino-acid chain: dCTP deaminase, dUMP-forming (190 aa).

DCTP-binding positions include 101-106, Asp119, 127-129, Gln148, Tyr162, and Gln174; these read KSSLGR and TLE. Glu129 serves as the catalytic Proton donor/acceptor. Positions 163–190 are disordered; the sequence is GSTRVGSKYQGQRGPTPSRSYQNFITST. The span at 171–190 shows a compositional bias: polar residues; it reads YQGQRGPTPSRSYQNFITST.

It belongs to the dCTP deaminase family. In terms of assembly, homotrimer.

The catalysed reaction is dCTP + 2 H2O = dUMP + NH4(+) + diphosphate. It functions in the pathway pyrimidine metabolism; dUMP biosynthesis; dUMP from dCTP: step 1/1. In terms of biological role, bifunctional enzyme that catalyzes both the deamination of dCTP to dUTP and the hydrolysis of dUTP to dUMP without releasing the toxic dUTP intermediate. This chain is dCTP deaminase, dUMP-forming, found in Mycolicibacterium paratuberculosis (strain ATCC BAA-968 / K-10) (Mycobacterium paratuberculosis).